The chain runs to 252 residues: Ribosomal RNA small subunit methyltransferase J (252 aa).

Residues 105–106 (RD), 121–122 (ER), and aspartate 175 contribute to the S-adenosyl-L-methionine site.

Belongs to the methyltransferase superfamily. RsmJ family.

It localises to the cytoplasm. The enzyme catalyses guanosine(1516) in 16S rRNA + S-adenosyl-L-methionine = N(2)-methylguanosine(1516) in 16S rRNA + S-adenosyl-L-homocysteine + H(+). Functionally, specifically methylates the guanosine in position 1516 of 16S rRNA. In Pasteurella multocida (strain Pm70), this protein is Ribosomal RNA small subunit methyltransferase J.